We begin with the raw amino-acid sequence, 261 residues long: Kynurenine formamidase (261 aa).

S9 carries the post-translational modification Phosphoserine. The HGGXW motif lies at 36 to 40 (HGGAW). S110 serves as the catalytic Nucleophile. Active-site residues include D211 and H243.

This sequence belongs to the kynurenine formamidase family. In terms of assembly, homodimer.

The catalysed reaction is N-formyl-L-kynurenine + H2O = L-kynurenine + formate + H(+). Its pathway is amino-acid degradation; L-tryptophan degradation via kynurenine pathway; L-kynurenine from L-tryptophan: step 2/2. Functionally, catalyzes the hydrolysis of N-formyl-L-kynurenine to L-kynurenine, the second step in the kynurenine pathway of tryptophan degradation. Kynurenine may be further oxidized to nicotinic acid, NAD(H) and NADP(H). Required for elimination of toxic metabolites. The chain is Kynurenine formamidase from Saccharomyces cerevisiae (strain ATCC 204508 / S288c) (Baker's yeast).